A 273-amino-acid polypeptide reads, in one-letter code: MAVCNCFLQAPPLSRILLPVLSRRATTLSAGYGRLKSTVTFCSTVNRTSPLTSSVRAEVKRVSRKDDKVASATDVQFETPLKIVEYPDPILRAKNKRIDIFDENLKNLVDAMFDVMYKTDGIGLSAPQVGLNVQLMVFNPAGEPGEGKEIVLVNPKIKKYSDKLVPFDEGCLSFPGIYAEVVRPQSVKIDARDITGERFSISLSRLPARIFQHEYDHLEGVLFFDRMTDQVLDSIREELEALEKKYEEKTGLPSPERVEARQKRKAGVGFGKR.

The transit peptide at 1–56 (MAVCNCFLQAPPLSRILLPVLSRRATTLSAGYGRLKSTVTFCSTVNRTSPLTSSVR) directs the protein to the chloroplast and mitochondrion. Cys-171 and His-213 together coordinate Fe cation. Residue Glu-214 is part of the active site. Residue His-217 coordinates Fe cation. Residues 246 to 261 (YEEKTGLPSPERVEAR) show a composition bias toward basic and acidic residues. The disordered stretch occupies residues 246–273 (YEEKTGLPSPERVEARQKRKAGVGFGKR). The segment covering 262–273 (QKRKAGVGFGKR) has biased composition (basic residues).

It belongs to the polypeptide deformylase family. Homodimer. The cofactor is Fe(2+). In terms of tissue distribution, expressed in leaves and flowers.

The protein localises to the plastid. The protein resides in the chloroplast stroma. It is found in the mitochondrion. It catalyses the reaction N-terminal N-formyl-L-methionyl-[peptide] + H2O = N-terminal L-methionyl-[peptide] + formate. With respect to regulation, inhibited by actinonin. In terms of biological role, removes the formyl group from the N-terminal Met of newly synthesized proteins. Has a preferred substrate specificity towards the photosystem II (PS II) D1 polypeptide. The sequence is that of Peptide deformylase 1B, chloroplastic/mitochondrial (PDF1B) from Arabidopsis thaliana (Mouse-ear cress).